Consider the following 204-residue polypeptide: NAD(P)H-quinone oxidoreductase subunit M, chloroplastic (204 aa).

The N-terminal 27 residues, 1-27, are a transit peptide targeting the chloroplast; it reads MASTSMSLTRACKVHAVLACSIPSVSS.

It belongs to the NDH complex subunit M family. In terms of assembly, part of the chloroplast NDH complex, composed of a mixture of chloroplast and nucleus encoded subunits. Component of the NDH subcomplex A, at least composed of ndhH, ndhI, ndhJ, ndhK, ndhL, ndhM, ndhN and ndhO.

Its subcellular location is the plastid. The protein resides in the chloroplast thylakoid membrane. It carries out the reaction a plastoquinone + NADH + (n+1) H(+)(in) = a plastoquinol + NAD(+) + n H(+)(out). The catalysed reaction is a plastoquinone + NADPH + (n+1) H(+)(in) = a plastoquinol + NADP(+) + n H(+)(out). In terms of biological role, NDH shuttles electrons from NAD(P)H:plastoquinone, via FMN and iron-sulfur (Fe-S) centers, to quinones in the photosynthetic chain and possibly in a chloroplast respiratory chain. The immediate electron acceptor for the enzyme in this species is believed to be plastoquinone. Couples the redox reaction to proton translocation, and thus conserves the redox energy in a proton gradient. This is NAD(P)H-quinone oxidoreductase subunit M, chloroplastic from Physcomitrium patens (Spreading-leaved earth moss).